The chain runs to 65 residues: Large ribosomal subunit protein bL35 (65 aa).

The protein belongs to the bacterial ribosomal protein bL35 family.

This chain is Large ribosomal subunit protein bL35, found in Clostridium acetobutylicum (strain ATCC 824 / DSM 792 / JCM 1419 / IAM 19013 / LMG 5710 / NBRC 13948 / NRRL B-527 / VKM B-1787 / 2291 / W).